The primary structure comprises 186 residues: UPF0301 protein PM1869 (186 aa).

The protein belongs to the UPF0301 (AlgH) family.

The chain is UPF0301 protein PM1869 from Pasteurella multocida (strain Pm70).